The sequence spans 91 residues: UPF0250 protein PputGB1_4855 (91 aa).

This sequence belongs to the UPF0250 family.

This chain is UPF0250 protein PputGB1_4855, found in Pseudomonas putida (strain GB-1).